Here is a 141-residue protein sequence, read N- to C-terminus: Large ribosomal subunit protein uL16 (141 aa).

The protein belongs to the universal ribosomal protein uL16 family. Part of the 50S ribosomal subunit.

Binds 23S rRNA and is also seen to make contacts with the A and possibly P site tRNAs. The protein is Large ribosomal subunit protein uL16 of Petrotoga mobilis (strain DSM 10674 / SJ95).